A 38-amino-acid chain; its full sequence is Large ribosomal subunit protein bL36 (38 aa).

It belongs to the bacterial ribosomal protein bL36 family.

This is Large ribosomal subunit protein bL36 from Roseiflexus castenholzii (strain DSM 13941 / HLO8).